Reading from the N-terminus, the 366-residue chain is Transcription factor MYB28 (366 aa).

HTH myb-type domains lie at 9–61 (GEGL…TNYL) and 62–116 (KPEI…KKRL). 2 consecutive DNA-binding regions (H-T-H motif) follow at residues 37 to 61 (WRDI…TNYL) and 89 to 112 (WSVI…NTHL). The segment at 124 to 170 (VTHKPLASSSNPTVDENLNSPNASSSDKQYSRSSSMPFLSRPPPSSC) is disordered. Residues 130-146 (ASSSNPTVDENLNSPNA) are compositionally biased toward polar residues. Residues 147–158 (SSSDKQYSRSSS) are compositionally biased toward low complexity.

Can form complexes with MYC2, MYC3 or MYC4. In terms of tissue distribution, expressed in generative organs, mature leaves and trichomes.

The protein localises to the nucleus. Functionally, major regulator of short-chained aliphatic glucosinolates (GLSs) biosynthesis. Together with MYB29/HAG3 and MYB76/HAG2, promotes aliphatic glucosinolate biosynthesis but represses indolic glucosinolate biosynthesis. Prevents insect performance (e.g. lepidopteran insect Mamestra brassicae and Spodoptera exigua) by promoting glucosinolates. The chain is Transcription factor MYB28 (MYB28) from Arabidopsis thaliana (Mouse-ear cress).